Here is a 171-residue protein sequence, read N- to C-terminus: T-cell surface glycoprotein CD3 delta chain (171 aa).

Residues 1 to 21 form the signal peptide; sequence MEHSTFLSGLVLATLLSQVSP. At 22-105 the chain is on the extracellular side; it reads FKIPVEELED…CVELDPATLA (84 aa). A disulfide bridge connects residues Cys-37 and Cys-73. Asn-38, Asn-54, and Asn-74 each carry an N-linked (GlcNAc...) asparagine glycan. A helical transmembrane segment spans residues 106–126; that stretch reads GIIVTDVIATLLLALGVFCFA. Topologically, residues 127–171 are cytoplasmic; the sequence is GHETGRLSGAADTQALLRNDQVYQPLRDRDDAQYSRLGGNWARNK. The ITAM domain maps to 138 to 166; sequence DTQALLRNDQVYQPLRDRDDAQYSRLGGN. Residues Tyr-149 and Tyr-160 each carry the phosphotyrosine modification.

The TCR-CD3 complex is composed of a CD3D/CD3E and a CD3G/CD3E heterodimers that preferentially associate with TCRalpha and TCRbeta, respectively, to form TCRalpha/CD3E/CD3G and TCRbeta/CD3G/CD3E trimers. In turn, the hexamer interacts with CD3Z homodimer to form the TCR-CD3 complex. Alternatively, TCRalpha and TCRbeta can be replaced by TCRgamma and TCRdelta. Interacts with coreceptors CD4 and CD8. Phosphorylated on Tyr residues after T-cell receptor triggering by LCK in association with CD4/CD8. In terms of tissue distribution, CD3D is mostly present on T-lymphocytes with its TCR-CD3 partners. Present also in fetal NK-cells.

The protein localises to the cell membrane. In terms of biological role, part of the TCR-CD3 complex present on T-lymphocyte cell surface that plays an essential role in adaptive immune response. When antigen presenting cells (APCs) activate T-cell receptor (TCR), TCR-mediated signals are transmitted across the cell membrane by the CD3 chains CD3D, CD3E, CD3G and CD3Z. All CD3 chains contain immunoreceptor tyrosine-based activation motifs (ITAMs) in their cytoplasmic domain. Upon TCR engagement, these motifs become phosphorylated by Src family protein tyrosine kinases LCK and FYN, resulting in the activation of downstream signaling pathways. In addition of this role of signal transduction in T-cell activation, CD3D plays an essential role in thymocyte differentiation. Indeed, participates in correct intracellular TCR-CD3 complex assembly and surface expression. In absence of a functional TCR-CD3 complex, thymocytes are unable to differentiate properly. Interacts with CD4 and CD8 and thus serves to establish a functional link between the TCR and coreceptors CD4 and CD8, which is needed for activation and positive selection of CD4 or CD8 T-cells. The polypeptide is T-cell surface glycoprotein CD3 delta chain (CD3D) (Macaca fascicularis (Crab-eating macaque)).